A 53-amino-acid polypeptide reads, in one-letter code: Lectin alpha chain (53 aa).

It belongs to the leguminous lectin family. As to quaternary structure, tetramer of two alpha and two beta chains.

The chain is Lectin alpha chain from Lathyrus clymenum (Spanish vetchling).